The following is an 875-amino-acid chain: Alanine--tRNA ligase (875 aa).

Positions 564, 568, 666, and 670 each coordinate Zn(2+).

The protein belongs to the class-II aminoacyl-tRNA synthetase family. Homotetramer. Zn(2+) serves as cofactor.

It is found in the cytoplasm. The enzyme catalyses tRNA(Ala) + L-alanine + ATP = L-alanyl-tRNA(Ala) + AMP + diphosphate. Its function is as follows. Catalyzes the attachment of alanine to tRNA(Ala) in a two-step reaction: alanine is first activated by ATP to form Ala-AMP and then transferred to the acceptor end of tRNA(Ala). Also edits incorrectly charged Ser-tRNA(Ala) and Gly-tRNA(Ala) via its editing domain. The sequence is that of Alanine--tRNA ligase from Enterobacter sp. (strain 638).